We begin with the raw amino-acid sequence, 325 residues long: Phenylalanine--tRNA ligase alpha subunit (325 aa).

Position 251 (E251) interacts with Mg(2+).

The protein belongs to the class-II aminoacyl-tRNA synthetase family. Phe-tRNA synthetase alpha subunit type 1 subfamily. As to quaternary structure, tetramer of two alpha and two beta subunits. Mg(2+) serves as cofactor.

The protein localises to the cytoplasm. The enzyme catalyses tRNA(Phe) + L-phenylalanine + ATP = L-phenylalanyl-tRNA(Phe) + AMP + diphosphate + H(+). The protein is Phenylalanine--tRNA ligase alpha subunit of Thermotoga petrophila (strain ATCC BAA-488 / DSM 13995 / JCM 10881 / RKU-1).